The following is a 204-amino-acid chain: LexA repressor (204 aa).

Positions Val27–Ala47 form a DNA-binding region, H-T-H motif. Residues Ser126 and Lys164 each act as for autocatalytic cleavage activity in the active site.

Belongs to the peptidase S24 family. Homodimer.

The catalysed reaction is Hydrolysis of Ala-|-Gly bond in repressor LexA.. In terms of biological role, represses a number of genes involved in the response to DNA damage (SOS response), including recA and lexA. In the presence of single-stranded DNA, RecA interacts with LexA causing an autocatalytic cleavage which disrupts the DNA-binding part of LexA, leading to derepression of the SOS regulon and eventually DNA repair. The polypeptide is LexA repressor (Listeria welshimeri serovar 6b (strain ATCC 35897 / DSM 20650 / CCUG 15529 / CIP 8149 / NCTC 11857 / SLCC 5334 / V8)).